A 395-amino-acid polypeptide reads, in one-letter code: Imidazolonepropionase (395 aa).

Residues histidine 72 and histidine 74 each contribute to the Fe(3+) site. Histidine 72 and histidine 74 together coordinate Zn(2+). 4-imidazolone-5-propanoate is bound by residues arginine 81, tyrosine 144, and histidine 174. Tyrosine 144 is an N-formimidoyl-L-glutamate binding site. Histidine 231 is a binding site for Fe(3+). Residue histidine 231 participates in Zn(2+) binding. Glutamate 234 provides a ligand contact to 4-imidazolone-5-propanoate. A Fe(3+)-binding site is contributed by aspartate 306. Zn(2+) is bound at residue aspartate 306.

It belongs to the metallo-dependent hydrolases superfamily. HutI family. Zn(2+) serves as cofactor. Requires Fe(3+) as cofactor.

The protein localises to the cytoplasm. It carries out the reaction 4-imidazolone-5-propanoate + H2O = N-formimidoyl-L-glutamate. It functions in the pathway amino-acid degradation; L-histidine degradation into L-glutamate; N-formimidoyl-L-glutamate from L-histidine: step 3/3. Catalyzes the hydrolytic cleavage of the carbon-nitrogen bond in imidazolone-5-propanoate to yield N-formimidoyl-L-glutamate. It is the third step in the universal histidine degradation pathway. This is Imidazolonepropionase from Pyrobaculum arsenaticum (strain DSM 13514 / JCM 11321 / PZ6).